Reading from the N-terminus, the 1087-residue chain is DNA polymerase II large subunit (1087 aa).

The protein belongs to the archaeal DNA polymerase II family. Heterodimer of a large subunit and a small subunit.

The catalysed reaction is DNA(n) + a 2'-deoxyribonucleoside 5'-triphosphate = DNA(n+1) + diphosphate. It carries out the reaction Exonucleolytic cleavage in the 3'- to 5'-direction to yield nucleoside 5'-phosphates.. Functionally, possesses two activities: a DNA synthesis (polymerase) and an exonucleolytic activity that degrades single-stranded DNA in the 3'- to 5'-direction. Has a template-primer preference which is characteristic of a replicative DNA polymerase. This Thermoplasma acidophilum (strain ATCC 25905 / DSM 1728 / JCM 9062 / NBRC 15155 / AMRC-C165) protein is DNA polymerase II large subunit (polC).